Reading from the N-terminus, the 134-residue chain is MAIRPVYRPTIVKKRTKRFIRHQSDRYDKLKRNWRKPRGIDNRVRRRFKGQYLMPNIGYGSNKKTRHMLPNGFRKVLVHNVRELEILMMQNRKYCAEIAHGVSSKKRKTIVERAQQLSIRVTNSAARLRSQENE.

This sequence belongs to the eukaryotic ribosomal protein eL32 family.

The protein is Large ribosomal subunit protein eL32 (RpL32) of Spodoptera frugiperda (Fall armyworm).